The chain runs to 274 residues: Large ribosomal subunit protein uL2 (274 aa).

A disordered region spans residues 224–274 (VAMNPVDHPHGGGEGRTSGGRHPVTPWGIPTKGYKTRRNKRSNKLIVQKRK). The span at 257-274 (YKTRRNKRSNKLIVQKRK) shows a compositional bias: basic residues.

Belongs to the universal ribosomal protein uL2 family. As to quaternary structure, part of the 50S ribosomal subunit. Forms a bridge to the 30S subunit in the 70S ribosome.

Functionally, one of the primary rRNA binding proteins. Required for association of the 30S and 50S subunits to form the 70S ribosome, for tRNA binding and peptide bond formation. It has been suggested to have peptidyltransferase activity; this is somewhat controversial. Makes several contacts with the 16S rRNA in the 70S ribosome. This is Large ribosomal subunit protein uL2 from Francisella tularensis subsp. holarctica (strain FTNF002-00 / FTA).